Consider the following 263-residue polypeptide: Probable ribosomal RNA small subunit methyltransferase A (263 aa).

5 residues coordinate S-adenosyl-L-methionine: leucine 12, glycine 37, glutamate 58, aspartate 83, and asparagine 100.

It belongs to the class I-like SAM-binding methyltransferase superfamily. rRNA adenine N(6)-methyltransferase family. RsmA subfamily.

It is found in the cytoplasm. Its function is as follows. Specifically dimethylates two adjacent adenosines in the loop of a conserved hairpin near the 3'-end of 16S rRNA in the 30S particle. May play a critical role in biogenesis of 30S subunits. This chain is Probable ribosomal RNA small subunit methyltransferase A, found in Methanococcus maripaludis (strain C6 / ATCC BAA-1332).